The sequence spans 319 residues: Thioredoxin reductase (319 aa).

Residues serine 11–alanine 14, valine 40–alanine 41, glutamine 45, asparagine 54, valine 87, cysteine 145, aspartate 288, and arginine 295–alanine 297 contribute to the FAD site. The cysteines at positions 142 and 145 are disulfide-linked.

It belongs to the class-II pyridine nucleotide-disulfide oxidoreductase family. As to quaternary structure, homodimer. FAD is required as a cofactor.

The protein resides in the cytoplasm. It carries out the reaction [thioredoxin]-dithiol + NADP(+) = [thioredoxin]-disulfide + NADPH + H(+). This chain is Thioredoxin reductase (TRR1), found in Eremothecium gossypii (strain ATCC 10895 / CBS 109.51 / FGSC 9923 / NRRL Y-1056) (Yeast).